A 238-amino-acid polypeptide reads, in one-letter code: Sugar fermentation stimulation protein homolog (238 aa).

This sequence belongs to the SfsA family.

In Histophilus somni (strain 129Pt) (Haemophilus somnus), this protein is Sugar fermentation stimulation protein homolog.